A 321-amino-acid polypeptide reads, in one-letter code: Sphingolipid delta(4)-desaturase DES1 (321 aa).

Transmembrane regions (helical) follow at residues 41–61 (PNFK…LFVV), 68–88 (WLIV…MLAV), 107–127 (ILGF…FKKY), 157–177 (FGKF…PLII), 187–206 (IINT…FLGW), and 208–230 (PLAY…GHFI).

The protein belongs to the fatty acid desaturase type 1 family. DEGS subfamily. As to expression, testes.

The protein localises to the endoplasmic reticulum membrane. Its subcellular location is the membrane. It is found in the mitochondrion. The catalysed reaction is an N-acylsphinganine + 2 Fe(II)-[cytochrome b5] + O2 + 2 H(+) = an N-acylsphing-4-enine + 2 Fe(III)-[cytochrome b5] + 2 H2O. The enzyme catalyses an N-acyleicosasphinganine + 2 Fe(II)-[cytochrome b5] + O2 + 2 H(+) = an N-acyleicosasphing-4-enine + 2 Fe(III)-[cytochrome b5] + 2 H2O. Its pathway is sphingolipid metabolism. Has sphingolipid-delta-4-desaturase activity. Converts sphinganine-containing sphingolipids (such as N-acylsphinganines or dihydroceramides) into sphingolipids containing the delta-4-desaturated sphingoid base (E)-sphing-4-enine (such as N-acylsphing-4-enines or ceramides), which are required for many different functions (structural functions as well as signaling). Required to initiate spermatid differentiation among other signals. Required for central spindle assembly and cytokinesis during male meiosis, may act as part of an anchoring mechanism that links membrane-bounded cellular compartments to components of the cytoskeleton. This is Sphingolipid delta(4)-desaturase DES1 from Drosophila melanogaster (Fruit fly).